A 563-amino-acid polypeptide reads, in one-letter code: Putative ABC transporter ATP-binding protein SCO2324 (563 aa).

In terms of domain architecture, ABC transporter 1 spans 2 to 243 (IRFEDVSVTY…SPVYPPVVGL (242 aa)). 36–43 (GPSGVGKS) lines the ATP pocket. Residues 271 to 317 (AGREIPDHTPPPSAPLPAPPAPRPVTSRWRRRGKRPENPSAPTPYAA) are disordered. The span at 278 to 293 (HTPPPSAPLPAPPAPR) shows a compositional bias: pro residues. The region spanning 317-545 (AEVRSLAVRR…SPSYAPQVAK (229 aa)) is the ABC transporter 2 domain. 349-356 (GRNGAGKS) contacts ATP.

Belongs to the ABC transporter superfamily.

Its subcellular location is the cell membrane. Probably part of an ABC transporter complex. Responsible for energy coupling to the transport system. The chain is Putative ABC transporter ATP-binding protein SCO2324 from Streptomyces coelicolor (strain ATCC BAA-471 / A3(2) / M145).